Consider the following 446-residue polypeptide: G patch domain-containing protein 4 (446 aa).

An N-acetylmethionine modification is found at methionine 1. Residue threonine 4 is modified to Phosphothreonine. The region spanning 11–57 is the G-patch domain; it reads GMKFAEEQLLKHGWTQGKGLGRKENGITQALRVTLKQDTHGVGHDPA. Lysine 46 is covalently cross-linked (Glycyl lysine isopeptide (Lys-Gly) (interchain with G-Cter in SUMO2)). The residue at position 116 (threonine 116) is a Phosphothreonine. Disordered stretches follow at residues 116–140 and 188–446; these read TSGG…SKSP and QDPG…KKRD. Phosphoserine is present on residues serine 128, serine 130, and serine 139. A coiled-coil region spans residues 166–251; the sequence is TMKAKLARLE…KKKRRHQEGK (86 aa). Over residues 219–237 the composition is skewed to basic and acidic residues; that stretch reads ASERNDADEKHPEHAEQNI. Over residues 238–248 the composition is skewed to basic residues; that stretch reads RKSKKKKRRHQ. Basic and acidic residues-rich tracts occupy residues 249-268, 297-328, 363-375, and 392-409; these read EGKV…KEDA, HHEE…ESRA, REAE…DGRS, and LDVR…ESRA. Basic residues-rich tracts occupy residues 416–427 and 437–446; these read RGKRKRQQHPKK and KAKKKQKKRD.

The polypeptide is G patch domain-containing protein 4 (GPATCH4) (Homo sapiens (Human)).